Reading from the N-terminus, the 64-residue chain is Small hydrophobic protein (64 aa).

At 1–20 (MENTSITIEFSSKFWPYFTL) the chain is on the intravirion side. The interval 6-15 (ITIEFSSKFW) is interaction with host BCAP31. The chain crosses the membrane as a helical; Signal-anchor for type II membrane protein span at residues 21–44 (IHMITTIISLLIIISIMIAILNKL). Residues 38 to 43 (IAILNK) are interaction with small-molecule inhibitor. The Virion surface portion of the chain corresponds to 45–64 (CEYNVFHNKTFELPRARVNT). N-linked (GlcNAc...) asparagine; by host glycosylation occurs at asparagine 52.

This sequence belongs to the orthopneumovirus small hydrophobic protein family. As to quaternary structure, homopentamer forming a funnel-like pore. Interacts with glycoprotein G; this interaction occurs on the surface of virion particles and infected cells. Interacts with host BCAP31 (via C-terminus); this interaction is direct. In terms of processing, four species of SH have been detected in infected cell cytoplasm: a 7.5 kDa non-glycosylated form (SH0), a 13-15 kDa form that contains one or two N-linked carbohydrate side chains of the high-mannose type (SHg), a 21-30 kDa polylactosaminoglycan-modified form of the protein (SHp), and the isoform generated by alternative translational initiation. Of these different forms, SH0 is by far the most abundant protein detected during virus infection. Tyrosine phosphorylated.

Its subcellular location is the virion membrane. The protein localises to the host cell membrane. It localises to the host Golgi apparatus membrane. The protein resides in the host endoplasmic reticulum membrane. Its activity is regulated as follows. Channel activity is inhibited by copper. Also inhibited by small-molecule pyronin B. In terms of biological role, viroporin that forms a homopentameric ion channel displaying low ion selectivity. May play a role in virus morphogenesis and pathogenicity at various stages of the viral life cycle. Accumulates at the membrane of the Golgi apparatus in infected cells and may facilitate virus release by modifying the secretory pathway. May enhance host membrane permeability and disrupt cellular ion homeostasis, which can be sensed as damage-associated molecular patterns/danger signals, triggering NLRP3 inflammasome activation and inflammatory immune response. Also inhibits host TNFA-mediated signaling pathway and may delay apoptosis, allowing time for the virus to replicate. The sequence is that of Small hydrophobic protein from Homo sapiens (Human).